Here is a 500-residue protein sequence, read N- to C-terminus: ADP,ATP carrier protein 5 (500 aa).

11 helical membrane-spanning segments follow: residues 26–46, 62–82, 94–114, 149–169, 184–204, 224–244, 287–307, 328–348, 357–377, 381–401, and 469–489; these read LGKF…QNIL, IAGF…VIIY, IFYY…FVIY, YIVY…LLFW, FYTL…FLMM, ITLV…CCLL, LWLL…VEAV, LYIL…NNVM, AVIS…LIVF, ILSL…VSIG, and SISP…IYAV.

Belongs to the ADP/ATP translocase tlc family.

Its subcellular location is the cell membrane. Its function is as follows. Provides the rickettsial cell with host ATP in exchange for rickettsial ADP. This is an obligate exchange system. This energy acquiring activity is an important component of rickettsial parasitism. The polypeptide is ADP,ATP carrier protein 5 (tlcE) (Rickettsia typhi (strain ATCC VR-144 / Wilmington)).